We begin with the raw amino-acid sequence, 379 residues long: Sensor histidine kinase YhcY (379 aa).

Residues R185–S373 enclose the Histidine kinase domain. Position 191 is a phosphohistidine; by autocatalysis (H191).

It catalyses the reaction ATP + protein L-histidine = ADP + protein N-phospho-L-histidine.. Member of the two-component regulatory system YhcY/YhcZ. Probably activates YhcZ by phosphorylation. The polypeptide is Sensor histidine kinase YhcY (yhcY) (Bacillus subtilis (strain 168)).